The sequence spans 308 residues: Endonuclease G, mitochondrial (308 aa).

His-148 (proton acceptor) is an active-site residue. Residue Asn-180 coordinates Mg(2+).

It belongs to the DNA/RNA non-specific endonuclease family. In terms of assembly, homodimer; disulfide-linked. Interacts with crn-5, crn-4, crn-1 and cyn-13. The cofactor is Mg(2+).

It is found in the mitochondrion. Its function is as follows. Endonuclease important for programmed cell death; it mediates apoptotic DNA fragmentation. In Caenorhabditis elegans, this protein is Endonuclease G, mitochondrial (cps-6).